A 69-amino-acid chain; its full sequence is uncharacterized protein (69 aa).

The CHCH domain maps to 6-56 (SEECTPAKKKYDACFNDWYANKFLKGDLHNRDCDELFAEYKSCLLKALKTK). 2 short sequence motifs (cx9C motif) span residues 9-19 (CTPAKKKYDAC) and 38-48 (CDELFAEYKSC). 2 cysteine pairs are disulfide-bonded: Cys-9–Cys-48 and Cys-19–Cys-38.

It belongs to the TRIAP1/MDM35 family.

This is an uncharacterized protein from Schizosaccharomyces pombe (strain 972 / ATCC 24843) (Fission yeast).